We begin with the raw amino-acid sequence, 158 residues long: C-type natriuretic peptide 3 (158 aa).

Positions 1 to 21 (MSLNLPGYALFFILLVASSGA) are cleaved as a signal peptide. Positions 22-136 (KPAPDLQILE…SKRSRSRYKK (115 aa)) are excised as a propeptide. The disordered stretch occupies residues 32–95 (PPLSSLEEQE…EVQERGRGTG (64 aa)). A compositionally biased stretch (basic and acidic residues) spans 47–64 (VQEKVQEQQEEVQEKVQE). A compositionally biased stretch (acidic residues) spans 65–86 (QQEEVQEQQEEVQEQQEEQQEE). The cysteines at positions 142 and 158 are disulfide-linked.

It belongs to the natriuretic peptide family.

It localises to the secreted. In terms of biological role, exhibits natriuretic and vasodepressant activity. Has cGMP-stimulating activity. May help to regulate body fluid homeostasis in a variety of aquatic environments. In Takifugu rubripes (Japanese pufferfish), this protein is C-type natriuretic peptide 3.